A 282-amino-acid polypeptide reads, in one-letter code: 3-hydroxyanthranilate 3,4-dioxygenase (282 aa).

The segment at 1–160 (MAMAINVKKW…SKQYKSGKPD (160 aa)) is domain A (catalytic). Arginine 43 contacts O2. Fe cation contacts are provided by histidine 47, glutamate 53, and histidine 91. Residue glutamate 53 coordinates substrate. Substrate-binding residues include arginine 95 and glutamate 105. Positions 161-177 (PDQPKAKMPFCLSTEQV) are linker. The interval 178-282 (MEPFSFQHWL…LSTSQVPLPM (105 aa)) is domain B.

It belongs to the 3-HAO family. In terms of assembly, monomer. The cofactor is Fe(2+).

The protein localises to the cytoplasm. It localises to the cytosol. The enzyme catalyses 3-hydroxyanthranilate + O2 = (2Z,4Z)-2-amino-3-carboxymuconate 6-semialdehyde. It functions in the pathway cofactor biosynthesis; NAD(+) biosynthesis; quinolinate from L-kynurenine: step 3/3. In terms of biological role, catalyzes the oxidative ring opening of 3-hydroxyanthranilate to 2-amino-3-carboxymuconate semialdehyde, which spontaneously cyclizes to quinolinate. The protein is 3-hydroxyanthranilate 3,4-dioxygenase (haao) of Xenopus laevis (African clawed frog).